The primary structure comprises 345 residues: 4-hydroxy-2-oxovalerate aldolase 3 (345 aa).

A Pyruvate carboxyltransferase domain is found at 8–260; that stretch reads ITVHDMTLRD…ETGVDVWKIQ (253 aa). 16–17 is a binding site for substrate; it reads RD. D17 contributes to the Mn(2+) binding site. H20 acts as the Proton acceptor in catalysis. Substrate contacts are provided by S170 and H199. Positions 199 and 201 each coordinate Mn(2+). Y290 serves as a coordination point for substrate.

It belongs to the 4-hydroxy-2-oxovalerate aldolase family.

The catalysed reaction is (S)-4-hydroxy-2-oxopentanoate = acetaldehyde + pyruvate. The sequence is that of 4-hydroxy-2-oxovalerate aldolase 3 (aphG) from Comamonas testosteroni (Pseudomonas testosteroni).